Reading from the N-terminus, the 860-residue chain is Spindle and centriole-associated protein 1 (860 aa).

3 disordered regions span residues glutamate 160 to asparagine 200, glutamine 232 to alanine 254, and lysine 293 to asparagine 330. Position 236 is a phosphothreonine (threonine 236). Low complexity predominate over residues threonine 236 to glycine 249. Over residues proline 308 to asparagine 330 the composition is skewed to polar residues. Residues arginine 383–tyrosine 437 are a coiled coil. Serine 646 bears the Phosphoserine mark. Positions serine 729–glutamine 755 form a coiled coil. 3 positions are modified to phosphoserine: serine 765, serine 769, and serine 824. The segment at isoleucine 790–serine 860 is disordered. Residues serine 808 to serine 824 show a composition bias toward low complexity.

As to quaternary structure, interacts with CEP120.

Its subcellular location is the cytoplasm. It localises to the cytoskeleton. It is found in the microtubule organizing center. The protein resides in the centrosome. The protein localises to the centriole. Its subcellular location is the spindle. Regulator required for centriole duplication. for proper bipolar spindle formation and chromosome congression in mitosis. The polypeptide is Spindle and centriole-associated protein 1 (SPICE1) (Bos taurus (Bovine)).